We begin with the raw amino-acid sequence, 246 residues long: Cold-regulated protein 27 (246 aa).

Disordered stretches follow at residues 1 to 39 (MVGD…MYSA) and 151 to 232 (EPEN…VVPL). The segment covering 168–180 (SSGSASSLKQLSS) has biased composition (low complexity).

The protein resides in the nucleus. Its function is as follows. Together with COR28, involved in central circadian clock regulation and in flowering promotion, by binding to the chromatin of clock-associated evening genes TOC1, PRR5, ELF4 and cold-responsive genes in order to repress their transcription. Negative regulator of freezing tolerance. In Arabidopsis thaliana (Mouse-ear cress), this protein is Cold-regulated protein 27.